The primary structure comprises 311 residues: Ornithine carbamoyltransferase (311 aa).

Carbamoyl phosphate contacts are provided by residues Q85, R109, and 136 to 139 (HPCQ). L-ornithine is bound by residues N167, D231, and 235–236 (SM). Residues 271–272 (CL) and R299 each bind carbamoyl phosphate.

It belongs to the aspartate/ornithine carbamoyltransferase superfamily. OTCase family.

It localises to the cytoplasm. The catalysed reaction is carbamoyl phosphate + L-ornithine = L-citrulline + phosphate + H(+). It participates in amino-acid biosynthesis; L-arginine biosynthesis; L-arginine from L-ornithine and carbamoyl phosphate: step 1/3. Functionally, reversibly catalyzes the transfer of the carbamoyl group from carbamoyl phosphate (CP) to the N(epsilon) atom of ornithine (ORN) to produce L-citrulline. The sequence is that of Ornithine carbamoyltransferase (argF) from Geobacillus stearothermophilus (Bacillus stearothermophilus).